A 409-amino-acid polypeptide reads, in one-letter code: MFVRRFSLRDFRSWDSLTLDLTPGTTVFLGSNGHGKTNVLESLGYLSTLSSHRVSTDAPMIRSGSASAFAGATVVNNGRELTIDVELIEGKSNRARINQSPTRRPREVLGILQSVMFAPEDLSLVRGDPGDRRRYLDELLTSRIPRMAAVRADYDKVLRQRSALLKTAGAALRRGSRGGESDNVLSTLEVWDGHLAAHGAQLLAGRLELVHDLAPHLAESYRSIAPESRPASIRYKSSLGSSLDPEFTDPARISGIDDVAYLEERFHLELAQMRSKEIDRGVCLVGPHRDDLELVLGDSPAKGFASHGESWSFALSLRLAGFALLRADGSDPVLMLDDVFAELDRRRRRALATVAATAEQVLITAAVPEDVPDELEAAKFGVEASDTGDGRISRIVPVGSTDQEVEFDD.

30–37 (GSNGHGKT) contributes to the ATP binding site.

The protein belongs to the RecF family.

The protein resides in the cytoplasm. Its function is as follows. The RecF protein is involved in DNA metabolism; it is required for DNA replication and normal SOS inducibility. RecF binds preferentially to single-stranded, linear DNA. It also seems to bind ATP. This is DNA replication and repair protein RecF from Rhodococcus erythropolis (strain PR4 / NBRC 100887).